Here is a 598-residue protein sequence, read N- to C-terminus: Movement protein Hsp70h (598 aa).

Belongs to the heat shock protein 70 family. As to quaternary structure, homomultimer. Interacts with p20. This interaction allows the docking of the latter to the virion.

It localises to the virion. The protein localises to the host cell junction. It is found in the host plasmodesma. Functionally, transports viral genome to neighboring plant cells directly through plasmosdesmata, without any budding. The movement protein allows efficient cell to cell propagation, by bypassing the host cell wall barrier. Two movement proteins, p6, Hsp70h and three structural proteins, CP, CPm, and P64 are essential for cell-cell movement. Also plays a role in virion formation. Together with CPm and p64, encapsidates the 5'-terminal portion of the viral genome. This is Movement protein Hsp70h from Beta vulgaris (Sugar beet).